A 350-amino-acid polypeptide reads, in one-letter code: Flap endonuclease 1 (350 aa).

The tract at residues 1–102 (MGVTALRELI…REIERRQKLK (102 aa)) is N-domain. Residues aspartate 31, aspartate 84, glutamate 156, glutamate 158, aspartate 177, aspartate 179, and aspartate 240 each contribute to the Mg(2+) site. Positions 120-261 (EARKYAQMSA…TALRYVKSYG (142 aa)) are I-domain. The segment at 339-347 (KQSTLDMFF) is interaction with PCNA.

Belongs to the XPG/RAD2 endonuclease family. FEN1 subfamily. Interacts with PCNA. PCNA stimulates the nuclease activity without altering cleavage specificity. Mg(2+) serves as cofactor.

Its function is as follows. Structure-specific nuclease with 5'-flap endonuclease and 5'-3' exonuclease activities involved in DNA replication and repair. During DNA replication, cleaves the 5'-overhanging flap structure that is generated by displacement synthesis when DNA polymerase encounters the 5'-end of a downstream Okazaki fragment. Binds the unpaired 3'-DNA end and kinks the DNA to facilitate 5' cleavage specificity. Cleaves one nucleotide into the double-stranded DNA from the junction in flap DNA, leaving a nick for ligation. Also involved in the base excision repair (BER) pathway. Acts as a genome stabilization factor that prevents flaps from equilibrating into structures that lead to duplications and deletions. Also possesses 5'-3' exonuclease activity on nicked or gapped double-stranded DNA. This is Flap endonuclease 1 from Ignicoccus hospitalis (strain KIN4/I / DSM 18386 / JCM 14125).